The chain runs to 259 residues: Probable ATP-dependent transporter ycf16 (259 aa).

Residues 9-253 (LEVKNLKAQV…EIKGYDWLNE (245 aa)) enclose the ABC transporter domain. 41 to 48 (GPNGSGKS) provides a ligand contact to ATP.

It belongs to the ABC transporter superfamily. Ycf16 family.

The protein resides in the plastid. Its subcellular location is the cyanelle. The sequence is that of Probable ATP-dependent transporter ycf16 (ycf16) from Cyanophora paradoxa.